The following is a 597-amino-acid chain: Formate--tetrahydrofolate ligase (597 aa).

84–91 (TPLGEGKS) is a binding site for ATP.

This sequence belongs to the formate--tetrahydrofolate ligase family.

It catalyses the reaction (6S)-5,6,7,8-tetrahydrofolate + formate + ATP = (6R)-10-formyltetrahydrofolate + ADP + phosphate. The protein operates within one-carbon metabolism; tetrahydrofolate interconversion. In Dehalococcoides mccartyi (strain CBDB1), this protein is Formate--tetrahydrofolate ligase.